Here is a 338-residue protein sequence, read N- to C-terminus: Malate dehydrogenase, mitochondrial (338 aa).

The N-terminal 24 residues, 1–24 (MLSALARPAGAALRRSFSTSAQNN), are a transit peptide targeting the mitochondrion. Residues 31 to 37 (GASGGIG) and Asp57 contribute to the NAD(+) site. Residue Ser33 is glycosylated (O-linked (GalNAc...) serine). Lys78 and Lys91 each carry N6-acetyllysine; alternate. N6-succinyllysine; alternate occurs at positions 78 and 91. Substrate is bound by residues Arg104 and Arg110. NAD(+) is bound by residues Asn117 and 140-142 (ISN). A substrate-binding site is contributed by Asn142. At Lys165 the chain carries N6-acetyllysine. Residue Asp173 is the Proton relay of the active site. Arg176 lines the substrate pocket. Lys185 is modified (N6-acetyllysine; alternate). At Lys185 the chain carries N6-succinyllysine; alternate. His200 serves as the catalytic Proton acceptor. An N6-succinyllysine modification is found at Lys203. Residues Lys215 and Lys239 each carry the N6-acetyllysine; alternate modification. N6-succinyllysine; alternate is present on residues Lys215 and Lys239. Position 239 is an N6-malonyllysine; alternate (Lys239). Ser246 is subject to Phosphoserine. Residue Met251 participates in NAD(+) binding. Lys269 is subject to N6-succinyllysine. An N6-acetyllysine; alternate mark is found at Lys296, Lys301, Lys307, Lys314, and Lys324. Residues Lys296, Lys301, Lys307, Lys314, and Lys324 each carry the N6-succinyllysine; alternate modification. Residue Lys307 is modified to N6-malonyllysine; alternate. Position 326 is a phosphoserine (Ser326). Residues Lys328, Lys329, and Lys335 each carry the N6-acetyllysine; alternate modification. Position 328 is an N6-succinyllysine; alternate (Lys328). Lys329 carries the post-translational modification N6-malonyllysine; alternate. At Lys335 the chain carries N6-succinyllysine; alternate.

The protein belongs to the LDH/MDH superfamily. MDH type 1 family. As to quaternary structure, homodimer. Acetylation is enhanced after treatment either with trichostin A (TSA) or with nicotinamide (NAM) with the appearance of tri- and tetraacetylations. Glucose also increases acetylation. Ubiquitously expressed. Highly expressed in skeletal muscle and heart. Also expressed in liver, ileum, colon, kidney and adipose tissue, and at very low levels in lung, pancreas, stomach and spleen.

The protein resides in the mitochondrion matrix. It catalyses the reaction (S)-malate + NAD(+) = oxaloacetate + NADH + H(+). Enzyme activity is enhanced by acetylation. This Felis catus (Cat) protein is Malate dehydrogenase, mitochondrial.